The chain runs to 165 residues: Crossover junction endodeoxyribonuclease RuvC (165 aa).

Residues D7, E68, and H142 contribute to the active site. Mg(2+) is bound by residues D7, E68, and H142.

It belongs to the RuvC family. Homodimer which binds Holliday junction (HJ) DNA. The HJ becomes 2-fold symmetrical on binding to RuvC with unstacked arms; it has a different conformation from HJ DNA in complex with RuvA. In the full resolvosome a probable DNA-RuvA(4)-RuvB(12)-RuvC(2) complex forms which resolves the HJ. It depends on Mg(2+) as a cofactor.

The protein resides in the cytoplasm. The catalysed reaction is Endonucleolytic cleavage at a junction such as a reciprocal single-stranded crossover between two homologous DNA duplexes (Holliday junction).. Its function is as follows. The RuvA-RuvB-RuvC complex processes Holliday junction (HJ) DNA during genetic recombination and DNA repair. Endonuclease that resolves HJ intermediates. Cleaves cruciform DNA by making single-stranded nicks across the HJ at symmetrical positions within the homologous arms, yielding a 5'-phosphate and a 3'-hydroxyl group; requires a central core of homology in the junction. The consensus cleavage sequence is 5'-(A/T)TT(C/G)-3'. Cleavage occurs on the 3'-side of the TT dinucleotide at the point of strand exchange. HJ branch migration catalyzed by RuvA-RuvB allows RuvC to scan DNA until it finds its consensus sequence, where it cleaves and resolves the cruciform DNA. This chain is Crossover junction endodeoxyribonuclease RuvC, found in Anaplasma marginale (strain Florida).